A 279-amino-acid polypeptide reads, in one-letter code: Phycobilisome 34.5 kDa linker polypeptide, phycoerythrocyanin-associated, rod (279 aa).

Positions 2–178 (STSVAERLAI…LYRGRANSDN (177 aa)) constitute a PBS-linker domain. The region spanning 226-278 (ARMFIVEAIAGTLNTNVAVRRSRQVYTVPYDRLSATYQEIHKRGGKIVKITPA) is the CpcD-like domain.

The protein belongs to the phycobilisome linker protein family.

It is found in the cellular thylakoid membrane. Functionally, rod linker protein, associated with phycoerythrocyanin. Linker polypeptides determine the state of aggregation and the location of the disk-shaped phycobiliprotein units within the phycobilisome and modulate their spectroscopic properties in order to mediate a directed and optimal energy transfer. The sequence is that of Phycobilisome 34.5 kDa linker polypeptide, phycoerythrocyanin-associated, rod (pecC) from Mastigocladus laminosus (Fischerella sp.).